The chain runs to 139 residues: Large ribosomal subunit protein uL16 (139 aa).

It belongs to the universal ribosomal protein uL16 family. Part of the 50S ribosomal subunit.

In terms of biological role, binds 23S rRNA and is also seen to make contacts with the A and possibly P site tRNAs. The sequence is that of Large ribosomal subunit protein uL16 from Crocosphaera subtropica (strain ATCC 51142 / BH68) (Cyanothece sp. (strain ATCC 51142)).